The chain runs to 1165 residues: Pesticidal crystal protein Cry1Da (1165 aa).

The protein belongs to the delta endotoxin family.

Functionally, promotes colloidosmotic lysis by binding to the midgut epithelial cells of many lepidopteran larvae. This is Pesticidal crystal protein Cry1Da (cry1Da) from Bacillus thuringiensis subsp. aizawai.